A 381-amino-acid polypeptide reads, in one-letter code: MKFINDAIKESEKREKPSSSSMNSEIDRELREIIENSRAKIYVVGTGGAGNNTVTRLSEIGVEGAETIAVNTDAQDLFYSVANRKLLIGKNVCGGLGAGGVPEVGEECAEESEDDIRRELEGADMVFVTCGLGGGTGTGSAPVISKLAKKAGALTIAVATMPFSAEGLKRRENAERGLEKLQSAADTVIVIPNDKLLEVAPNLPLNKAFMVADEILGRAVKGITELITKPGLVSLDFADVRSIMKGSGMAMIGMGEAESGDRALESVYEALNSPLLDLDISNARGALINISGSSDLTLQEAERIVEVVAEELDPDANIIWGAQIQDELQNVIRTTIVVAGVRSPYIYGAHGSAEKEFLEEKQREKDSVDESVLEEFIDGVF.

The disordered stretch occupies residues 1 to 25 (MKFINDAIKESEKREKPSSSSMNSE). Residues 7–17 (AIKESEKREKP) show a composition bias toward basic and acidic residues. GTP contacts are provided by residues 48–52 (GAGNN), 135–137 (GTG), Glu166, Arg170, and Asp213.

Belongs to the FtsZ family. In terms of assembly, homodimer. Polymerizes to form a dynamic ring structure in a strictly GTP-dependent manner. Interacts directly with several other division proteins.

It is found in the cytoplasm. Essential cell division protein that forms a contractile ring structure (Z ring) at the future cell division site. The regulation of the ring assembly controls the timing and the location of cell division. One of the functions of the FtsZ ring is to recruit other cell division proteins to the septum to produce a new cell wall between the dividing cells. Binds GTP and shows GTPase activity. This is Cell division protein FtsZ from Methanothermobacter thermautotrophicus (strain ATCC 29096 / DSM 1053 / JCM 10044 / NBRC 100330 / Delta H) (Methanobacterium thermoautotrophicum).